Here is a 585-residue protein sequence, read N- to C-terminus: Cytidine monophosphate-N-acetylneuraminic acid hydroxylase (585 aa).

Positions 9 to 107 (LSPVEVANLK…VEMDENNRLL (99 aa)) constitute a Rieske domain. Cysteine 49, histidine 51, cysteine 70, and histidine 73 together coordinate [2Fe-2S] cluster.

This sequence belongs to the CMP-Neu5Ac hydroxylase family. [2Fe-2S] cluster is required as a cofactor.

It localises to the cytoplasm. It carries out the reaction CMP-N-acetyl-beta-neuraminate + 2 Fe(II)-[cytochrome b5] + O2 + 2 H(+) = CMP-N-glycoloyl-beta-neuraminate + 2 Fe(III)-[cytochrome b5] + H2O. Its pathway is amino-sugar metabolism; N-acetylneuraminate metabolism. Functionally, sialic acids are components of carbohydrate chains of glycoconjugates and are involved in cell-cell recognition and cell-pathogen interactions. Catalyzes the conversion of CMP-N-acetylneuraminic acid (CMP-Neu5Ac) into its hydroxylated derivative CMP-N-glycolylneuraminic acid (CMP-Neu5Gc), a sialic acid abundantly expressed at the surface of many cells. In Pongo pygmaeus (Bornean orangutan), this protein is Cytidine monophosphate-N-acetylneuraminic acid hydroxylase (CMAH).